The following is an 89-amino-acid chain: uncharacterized protein (89 aa).

This is an uncharacterized protein from Vaccinia virus (strain Copenhagen) (VACV).